The primary structure comprises 150 residues: Macrodomain Ter protein (150 aa).

The protein belongs to the MatP family. As to quaternary structure, homodimer.

It localises to the cytoplasm. Functionally, required for spatial organization of the terminus region of the chromosome (Ter macrodomain) during the cell cycle. Prevents early segregation of duplicated Ter macrodomains during cell division. Binds specifically to matS, which is a 13 bp signature motif repeated within the Ter macrodomain. This Salmonella agona (strain SL483) protein is Macrodomain Ter protein.